Here is a 373-residue protein sequence, read N- to C-terminus: Tomoregulin-1 (373 aa).

The signal sequence occupies residues 1-36 (MGAQAPLRLPAAPPLAVCGYTSVLLLFAFCLPGSGA). Over 37-323 (SNQPAGGGGD…VPSRQKLTHV (287 aa)) the chain is Extracellular. N-linked (GlcNAc...) asparagine glycosylation occurs at asparagine 56. Residues 91 to 138 (ACQFQCHTNYIPVCGSNGDTYQNECFLRRAACKHQKDITVVARGPCYS) enclose the Kazal-like 1 domain. Disulfide bonds link cysteine 92–cysteine 122, cysteine 96–cysteine 115, and cysteine 104–cysteine 136. Residue asparagine 140 is glycosylated (N-linked (GlcNAc...) asparagine). A disordered region spans residues 140–162 (NGSGSGEGEEEGSGAGAHRKHSK). The Kazal-like 2 domain maps to 182–230 (VCNIDCSGYSFNPVCASDGSSYNNPCFVREASCIRQEQIDIRHLGHCTD). Disulfide bonds link cysteine 183/cysteine 214, cysteine 187/cysteine 207, cysteine 196/cysteine 228, cysteine 268/cysteine 281, cysteine 276/cysteine 292, and cysteine 294/cysteine 303. The region spanning 264 to 304 (SHMPCPENLNGYCIHGKCEFIYSTQKASCRCESGYTGQHCE) is the EGF-like domain. The helical transmembrane segment at 324-344 (LIAAIIGAVQIAIIVAIVMCI) threads the bilayer. The Cytoplasmic portion of the chain corresponds to 345–373 (TRKCPKNNRGRRQKQNLGHFTSETSSRMV). The interval 352 to 373 (NRGRRQKQNLGHFTSETSSRMV) is disordered. A compositionally biased stretch (polar residues) spans 359–373 (QNLGHFTSETSSRMV).

The protein belongs to the tomoregulin family. As to quaternary structure, may interact with ST14.

The protein localises to the cell membrane. In terms of biological role, neuron-specific restriction factor that prevents herpes simplex virus 1 (HHV-1) infection in the brain by blocking viral entry. Also able to restrict herpes simplex virus 2 (HHV-2) infection, although to a lesser extent. Acts by preventing the association between the viral glycoprotein D (gD) and its cell surface receptor NECTIN1, thereby inhibiting fusion of the virus and the cell membrane. Also able to prevent the association between the viral glycoprotein B (gB) and MYH9/NMMHC-IIA and MYH10/NMMHC-IIB receptors. The chain is Tomoregulin-1 (Tmeff1) from Rattus norvegicus (Rat).